The primary structure comprises 193 residues: Potassium-transporting ATPase KdpC subunit (193 aa).

The helical transmembrane segment at 11 to 31 (FTLVFMVLLGLVYPFVMTGIA) threads the bilayer.

Belongs to the KdpC family. The system is composed of three essential subunits: KdpA, KdpB and KdpC.

Its subcellular location is the cell membrane. Functionally, part of the high-affinity ATP-driven potassium transport (or Kdp) system, which catalyzes the hydrolysis of ATP coupled with the electrogenic transport of potassium into the cytoplasm. This subunit acts as a catalytic chaperone that increases the ATP-binding affinity of the ATP-hydrolyzing subunit KdpB by the formation of a transient KdpB/KdpC/ATP ternary complex. This Caldanaerobacter subterraneus subsp. tengcongensis (strain DSM 15242 / JCM 11007 / NBRC 100824 / MB4) (Thermoanaerobacter tengcongensis) protein is Potassium-transporting ATPase KdpC subunit.